Here is a 450-residue protein sequence, read N- to C-terminus: Chromosomal replication initiator protein DnaA 2 (450 aa).

The interval 1-87 (MLTCNECTTW…LEFVVAEHKK (87 aa)) is domain I, interacts with DnaA modulators. Residues 87 to 114 (KPSAPVASQKESNEGISEVFEETKDFEL) are domain II. The tract at residues 115 to 330 (KLNLSYRFDN…GAINKLTAYC (216 aa)) is domain III, AAA+ region. Residues Gly159, Gly161, Lys162, and Thr163 each coordinate ATP. Residues 331–450 (RLFGKSLTET…VNLCKNHIVG (120 aa)) are domain IV, binds dsDNA.

This sequence belongs to the DnaA family. In terms of assembly, oligomerizes as a right-handed, spiral filament on DNA at oriC.

The protein localises to the cytoplasm. Plays an essential role in the initiation and regulation of chromosomal replication. ATP-DnaA binds to the origin of replication (oriC) to initiate formation of the DNA replication initiation complex once per cell cycle. Binds the DnaA box (a 9 base pair repeat at the origin) and separates the double-stranded (ds)DNA. Forms a right-handed helical filament on oriC DNA; dsDNA binds to the exterior of the filament while single-stranded (ss)DNA is stabiized in the filament's interior. The ATP-DnaA-oriC complex binds and stabilizes one strand of the AT-rich DNA unwinding element (DUE), permitting loading of DNA polymerase. After initiation quickly degrades to an ADP-DnaA complex that is not apt for DNA replication. Binds acidic phospholipids. The sequence is that of Chromosomal replication initiator protein DnaA 2 from Chlamydia pneumoniae (Chlamydophila pneumoniae).